The following is a 244-amino-acid chain: Flavin-dependent thymidylate synthase (244 aa).

A ThyX domain is found at 17 to 239 (ITVELVKHSA…PETHAAFEKQ (223 aa)). Residues serine 68, 91 to 93 (RHR), and glutamate 99 each bind FAD. Residues 88–91 (EFMR), 99–103 (EESGR), and arginine 171 contribute to the dUMP site. The ThyX motif signature appears at 91 to 101 (RHRIASYNEES). FAD is bound by residues 187 to 189 (NAR) and asparagine 193. Arginine 198 contacts dUMP. Arginine 198 (involved in ionization of N3 of dUMP, leading to its activation) is an active-site residue.

The protein belongs to the thymidylate synthase ThyX family. As to quaternary structure, homotetramer. The cofactor is FAD.

The enzyme catalyses dUMP + (6R)-5,10-methylene-5,6,7,8-tetrahydrofolate + NADPH + H(+) = dTMP + (6S)-5,6,7,8-tetrahydrofolate + NADP(+). The protein operates within pyrimidine metabolism; dTTP biosynthesis. Catalyzes the reductive methylation of 2'-deoxyuridine-5'-monophosphate (dUMP) to 2'-deoxythymidine-5'-monophosphate (dTMP) while utilizing 5,10-methylenetetrahydrofolate (mTHF) as the methyl donor, and NADPH and FADH(2) as the reductant. The sequence is that of Flavin-dependent thymidylate synthase from Tropheryma whipplei (strain Twist) (Whipple's bacillus).